Here is a 98-residue protein sequence, read N- to C-terminus: UPF0251 protein Sputcn32_0687 (98 aa).

It belongs to the UPF0251 family.

The protein is UPF0251 protein Sputcn32_0687 of Shewanella putrefaciens (strain CN-32 / ATCC BAA-453).